The sequence spans 424 residues: Tyrosine--tRNA ligase (424 aa).

Tyr-37 serves as a coordination point for L-tyrosine. Residues 42 to 51 (PTADSLHLGH) carry the 'HIGH' region motif. The L-tyrosine site is built by Tyr-175 and Gln-179. Positions 235–239 (KFGKT) match the 'KMSKS' region motif. Residue Lys-238 participates in ATP binding. Positions 357–414 (ADLQQALVNAELVPSRGQARTMISSNAVAINGEKQSDPEYAFTDADRLFGRYTLLRRG) constitute an S4 RNA-binding domain.

Belongs to the class-I aminoacyl-tRNA synthetase family. TyrS type 1 subfamily. Homodimer.

The protein localises to the cytoplasm. It catalyses the reaction tRNA(Tyr) + L-tyrosine + ATP = L-tyrosyl-tRNA(Tyr) + AMP + diphosphate + H(+). In terms of biological role, catalyzes the attachment of tyrosine to tRNA(Tyr) in a two-step reaction: tyrosine is first activated by ATP to form Tyr-AMP and then transferred to the acceptor end of tRNA(Tyr). This chain is Tyrosine--tRNA ligase, found in Yersinia enterocolitica serotype O:8 / biotype 1B (strain NCTC 13174 / 8081).